The sequence spans 122 residues: Large ribosomal subunit protein uL14 (122 aa).

This sequence belongs to the universal ribosomal protein uL14 family. Part of the 50S ribosomal subunit. Forms a cluster with proteins L3 and L19. In the 70S ribosome, L14 and L19 interact and together make contacts with the 16S rRNA in bridges B5 and B8.

Functionally, binds to 23S rRNA. Forms part of two intersubunit bridges in the 70S ribosome. This chain is Large ribosomal subunit protein uL14, found in Rhodopseudomonas palustris (strain HaA2).